Consider the following 150-residue polypeptide: Avidin-related protein 2 (150 aa).

The signal sequence occupies residues 1 to 24 (MVHATSPLLLLLLLSLALVAPSLS). Residues 26–147 (RKCSLTGEWD…GNNDFTRQHT (122 aa)) enclose the Avidin-like domain. Cys-28 and Cys-105 form a disulfide bridge. Biotin-binding residues include Asn-36, Ser-40, Tyr-57, Thr-59, and Asp-63. 2 N-linked (GlcNAc...) asparagine glycosylation sites follow: Asn-67 and Asn-93. Positions 95, 99, and 140 each coordinate biotin.

Homotetramer. Post-translationally, glycosylated.

It localises to the secreted. Forms a strong non-covalent specific complex with biotin. The sequence is that of Avidin-related protein 2 (AVR2) from Gallus gallus (Chicken).